The chain runs to 467 residues: ATP synthase subunit beta, chloroplastic (467 aa).

149 to 156 (GGAGVGKT) lines the ATP pocket.

It belongs to the ATPase alpha/beta chains family. As to quaternary structure, F-type ATPases have 2 components, CF(1) - the catalytic core - and CF(0) - the membrane proton channel. CF(1) has five subunits: alpha(3), beta(3), gamma(1), delta(1), epsilon(1). CF(0) has four main subunits: a(1), b(1), b'(1) and c(9-12).

It localises to the plastid. It is found in the chloroplast thylakoid membrane. The catalysed reaction is ATP + H2O + 4 H(+)(in) = ADP + phosphate + 5 H(+)(out). In terms of biological role, produces ATP from ADP in the presence of a proton gradient across the membrane. The catalytic sites are hosted primarily by the beta subunits. This is ATP synthase subunit beta, chloroplastic from Cyanidioschyzon merolae (strain NIES-3377 / 10D) (Unicellular red alga).